A 180-amino-acid polypeptide reads, in one-letter code: Large ribosomal subunit protein uL5 (180 aa).

The protein belongs to the universal ribosomal protein uL5 family. In terms of assembly, part of the 50S ribosomal subunit; part of the 5S rRNA/L5/L18/L25 subcomplex. Contacts the 5S rRNA and the P site tRNA. Forms a bridge to the 30S subunit in the 70S ribosome.

Its function is as follows. This is one of the proteins that bind and probably mediate the attachment of the 5S RNA into the large ribosomal subunit, where it forms part of the central protuberance. In the 70S ribosome it contacts protein S13 of the 30S subunit (bridge B1b), connecting the 2 subunits; this bridge is implicated in subunit movement. Contacts the P site tRNA; the 5S rRNA and some of its associated proteins might help stabilize positioning of ribosome-bound tRNAs. In Streptococcus sanguinis (strain SK36), this protein is Large ribosomal subunit protein uL5.